The sequence spans 77 residues: Conotoxin Vc6.14 (77 aa).

An N-terminal signal peptide occupies residues 1–19; that stretch reads MEKLTILLLVAAVLMSTQA. Residues 20 to 37 constitute a propeptide that is removed on maturation; sequence MFQGGGEKRPKDKIKFLS. Intrachain disulfides connect Cys-51-Cys-65, Cys-58-Cys-69, and Cys-64-Cys-74.

It belongs to the conotoxin O2 superfamily. Expressed by the venom duct.

It is found in the secreted. Functionally, inhibits voltage-gated ion channels. The chain is Conotoxin Vc6.14 from Conus victoriae (Queen Victoria cone).